Consider the following 908-residue polypeptide: 26S proteasome non-ATPase regulatory subunit 2 (908 aa).

Methionine 1 is subject to N-acetylmethionine. The disordered stretch occupies residues 1 to 51 (MEEGGRDKTPVQSQQPSATAPSGADEKSSGKERRDAGEKDKEQELSEEDKQ). At threonine 9 the chain carries Phosphothreonine. Positions 10–20 (PVQSQQPSATA) are enriched in polar residues. Residues 24-51 (ADEKSSGKERRDAGEKDKEQELSEEDKQ) are compositionally biased toward basic and acidic residues. Serine 29 and serine 147 each carry phosphoserine. At tyrosine 194 the chain carries Phosphotyrosine. A phosphoserine mark is found at serine 361 and serine 363. PC repeat units lie at residues 409–442 (SAAA…YIKS), 443–479 (GALL…TMRL), 480–514 (GSIF…SMEV), 517–551 (VTAL…TELK), and 560–589 (LGLG…PFRS). Position 551 is an N6-acetyllysine (lysine 551). Residues 623–643 (KEKEEDKDKKEKKDKDKKEAP) show a composition bias toward basic and acidic residues. The interval 623–645 (KEKEEDKDKKEKKDKDKKEAPAD) is disordered. PC repeat units follow at residues 692–723 (LALA…EVSY) and 742–757 (AAML…KDPN). A required for interaction with UBLCP1 region spans residues 708 to 903 (DTLSKFSHDA…LEGFVILRKN (196 aa)).

Belongs to the proteasome subunit S2 family. In terms of assembly, component of the 19S proteasome regulatory particle complex. The 26S proteasome consists of a 20S core particle (CP) and two 19S regulatory subunits (RP). The regulatory particle is made of a lid composed of 9 subunits, a base containing 6 ATPases and few additional components including PSMD2. Interacts with RPGRIP1L. Interacts with CRY1 in a KDM8-dependent manner. Interacts (via C-terminus) with phosphatase UBLCP1 (via ubiquitin-like domain); the interaction recruits UBLCP1 to the 19S regulatory particle where it dephosphorylates 19S subunit PSMC2/RPT1 which impairs PSMC2 ATPase activity and disrupts 26S proteasome assembly.

Component of the 26S proteasome, a multiprotein complex involved in the ATP-dependent degradation of ubiquitinated proteins. This complex plays a key role in the maintenance of protein homeostasis by removing misfolded or damaged proteins, which could impair cellular functions, and by removing proteins whose functions are no longer required. Therefore, the proteasome participates in numerous cellular processes, including cell cycle progression, apoptosis, or DNA damage repair. Its function is as follows. Binds to the intracellular domain of tumor necrosis factor type 1 receptor. The binding domain of TRAP1 and TRAP2 resides outside the death domain of TNFR1. This Rattus norvegicus (Rat) protein is 26S proteasome non-ATPase regulatory subunit 2 (Psmd2).